We begin with the raw amino-acid sequence, 419 residues long: Histidine--tRNA ligase (419 aa).

Belongs to the class-II aminoacyl-tRNA synthetase family.

The protein resides in the cytoplasm. The catalysed reaction is tRNA(His) + L-histidine + ATP = L-histidyl-tRNA(His) + AMP + diphosphate + H(+). This Pyrobaculum aerophilum (strain ATCC 51768 / DSM 7523 / JCM 9630 / CIP 104966 / NBRC 100827 / IM2) protein is Histidine--tRNA ligase.